Reading from the N-terminus, the 66-residue chain is Ranalexin (66 aa).

A signal peptide spans 1 to 20 (MFTLKKSLLLLFFLGTINLS). A propeptide spans 21 to 44 (LCEEERNAEEERRDNPDERDVEVE) (small acidic peptide). Cys60 and Cys66 are disulfide-bonded.

This sequence belongs to the frog skin active peptide (FSAP) family. Brevinin subfamily. In terms of tissue distribution, expressed by the skin dorsal glands.

It is found in the secreted. In terms of biological role, potent microbicidal activity, active against S.aureus and E.coli. It also acts as a membrane-disruptive agent at higher concentrations. This is Ranalexin from Aquarana catesbeiana (American bullfrog).